Here is a 350-residue protein sequence, read N- to C-terminus: Phenylalanine--tRNA ligase alpha subunit (350 aa).

Residue glutamate 262 coordinates Mg(2+).

The protein belongs to the class-II aminoacyl-tRNA synthetase family. Phe-tRNA synthetase alpha subunit type 1 subfamily. In terms of assembly, tetramer of two alpha and two beta subunits. It depends on Mg(2+) as a cofactor.

Its subcellular location is the cytoplasm. The catalysed reaction is tRNA(Phe) + L-phenylalanine + ATP = L-phenylalanyl-tRNA(Phe) + AMP + diphosphate + H(+). The chain is Phenylalanine--tRNA ligase alpha subunit (pheS) from Thermus thermophilus (strain ATCC 27634 / DSM 579 / HB8).